Reading from the N-terminus, the 443-residue chain is ATP-dependent protease ATPase subunit HslU (443 aa).

Residues Ile-18, 60–65, Asp-256, Glu-321, and Arg-393 contribute to the ATP site; that span reads GVGKTE.

This sequence belongs to the ClpX chaperone family. HslU subfamily. A double ring-shaped homohexamer of HslV is capped on each side by a ring-shaped HslU homohexamer. The assembly of the HslU/HslV complex is dependent on binding of ATP.

Its subcellular location is the cytoplasm. Its function is as follows. ATPase subunit of a proteasome-like degradation complex; this subunit has chaperone activity. The binding of ATP and its subsequent hydrolysis by HslU are essential for unfolding of protein substrates subsequently hydrolyzed by HslV. HslU recognizes the N-terminal part of its protein substrates and unfolds these before they are guided to HslV for hydrolysis. In Escherichia coli O157:H7 (strain EC4115 / EHEC), this protein is ATP-dependent protease ATPase subunit HslU.